The sequence spans 394 residues: 8-amino-7-oxononanoate synthase (394 aa).

Arginine 21 contributes to the substrate binding site. 112–113 (GY) provides a ligand contact to pyridoxal 5'-phosphate. Histidine 137 contacts substrate. Residues serine 183, histidine 211, and threonine 239 each contribute to the pyridoxal 5'-phosphate site. Lysine 242 bears the N6-(pyridoxal phosphate)lysine mark. Position 358 (threonine 358) interacts with substrate.

It belongs to the class-II pyridoxal-phosphate-dependent aminotransferase family. BioF subfamily. Homodimer. The cofactor is pyridoxal 5'-phosphate.

It carries out the reaction 6-carboxyhexanoyl-[ACP] + L-alanine + H(+) = (8S)-8-amino-7-oxononanoate + holo-[ACP] + CO2. It participates in cofactor biosynthesis; biotin biosynthesis. Catalyzes the decarboxylative condensation of pimeloyl-[acyl-carrier protein] and L-alanine to produce 8-amino-7-oxononanoate (AON), [acyl-carrier protein], and carbon dioxide. The protein is 8-amino-7-oxononanoate synthase of Paraburkholderia xenovorans (strain LB400).